The sequence spans 213 residues: Ribosomal RNA small subunit methyltransferase G (213 aa).

Residues G72, F77, 125 to 126 (IE), and R141 each bind S-adenosyl-L-methionine.

The protein belongs to the methyltransferase superfamily. RNA methyltransferase RsmG family.

Its subcellular location is the cytoplasm. It carries out the reaction guanosine(527) in 16S rRNA + S-adenosyl-L-methionine = N(7)-methylguanosine(527) in 16S rRNA + S-adenosyl-L-homocysteine. Specifically methylates the N7 position of guanine in position 527 of 16S rRNA. The polypeptide is Ribosomal RNA small subunit methyltransferase G (Rhizobium meliloti (strain 1021) (Ensifer meliloti)).